A 441-amino-acid polypeptide reads, in one-letter code: Zinc finger and BTB domain-containing protein 8A (441 aa).

A BTB domain is found at C24 to G92. Composition is skewed to polar residues over residues E146–Q170 and K178–L197. The tract at residues E146–E252 is disordered. Phosphoserine is present on residues S161 and S167. Residues K178, K182, and K199 each participate in a glycyl lysine isopeptide (Lys-Gly) (interchain with G-Cter in SUMO2) cross-link. Residues T198–K208 show a composition bias toward basic and acidic residues. A compositionally biased stretch (low complexity) spans S234–Q248. 2 consecutive C2H2-type zinc fingers follow at residues F282–H304 and Y310–H333. K437 is covalently cross-linked (Glycyl lysine isopeptide (Lys-Gly) (interchain with G-Cter in SUMO2)).

It localises to the nucleus. In terms of biological role, may be involved in transcriptional regulation. This is Zinc finger and BTB domain-containing protein 8A (ZBTB8A) from Bos taurus (Bovine).